The sequence spans 194 residues: dCTP deaminase (194 aa).

DCTP-binding positions include 110–115 (RSSLAR), Asp-128, 136–138 (VLE), Tyr-171, Lys-178, and Gln-182. The Proton donor/acceptor role is filled by Glu-138.

Belongs to the dCTP deaminase family. As to quaternary structure, homotrimer.

The enzyme catalyses dCTP + H2O + H(+) = dUTP + NH4(+). Its pathway is pyrimidine metabolism; dUMP biosynthesis; dUMP from dCTP (dUTP route): step 1/2. Its function is as follows. Catalyzes the deamination of dCTP to dUTP. This Mannheimia succiniciproducens (strain KCTC 0769BP / MBEL55E) protein is dCTP deaminase.